Consider the following 199-residue polypeptide: MLKEIRPAIVLLLALTLLTGLAYPLAMTALAGVIFPKQAQGSLIEQDGQVIGSALIGQPFTEDKYFHGRPSATTAADPQDSSKTVPAPYNAANSAGSNLGPTNKALIDRVKDDVDKLKAENPSAAVPVDLVTTSASGLDPDISPEAALFQVPRVAKARGLSEERLRQLVSDHSKARLAGLLGEPRVNVLALNLALDAAK.

Residues 7-27 (PAIVLLLALTLLTGLAYPLAM) form a helical membrane-spanning segment. Positions 67 to 86 (HGRPSATTAADPQDSSKTVP) are disordered. A compositionally biased stretch (polar residues) spans 71 to 84 (SATTAADPQDSSKT).

The protein belongs to the KdpC family. The system is composed of three essential subunits: KdpA, KdpB and KdpC.

The protein localises to the cell inner membrane. Part of the high-affinity ATP-driven potassium transport (or Kdp) system, which catalyzes the hydrolysis of ATP coupled with the electrogenic transport of potassium into the cytoplasm. This subunit acts as a catalytic chaperone that increases the ATP-binding affinity of the ATP-hydrolyzing subunit KdpB by the formation of a transient KdpB/KdpC/ATP ternary complex. The sequence is that of Potassium-transporting ATPase KdpC subunit from Rhodopseudomonas palustris (strain BisB18).